Consider the following 181-residue polypeptide: Oligoribonuclease (181 aa).

Positions 8–171 (LIWIDLEMTG…DDIRESIAEL (164 aa)) constitute an Exonuclease domain. The active site involves Y129.

The protein belongs to the oligoribonuclease family.

The protein localises to the cytoplasm. In terms of biological role, 3'-to-5' exoribonuclease specific for small oligoribonucleotides. The protein is Oligoribonuclease of Alcanivorax borkumensis (strain ATCC 700651 / DSM 11573 / NCIMB 13689 / SK2).